We begin with the raw amino-acid sequence, 594 residues long: KIF-binding protein (594 aa).

The protein belongs to the KIF-binding protein family.

The protein resides in the cytoplasm. Its subcellular location is the cytoskeleton. Activator of KIF1B plus-end-directed microtubule motor activity. Required for organization of axonal microtubules, and axonal outgrowth and maintenance during peripheral and central nervous system development. The polypeptide is KIF-binding protein (Kifbp) (Gallus gallus (Chicken)).